A 392-amino-acid polypeptide reads, in one-letter code: MSCESCLPALSCRTSCSSRPCVPPSCHGCTLPGACNIPANVGNCNWFCEGSFNGNEKETMQFLNDRLASYMEKVRQLERENAELECRIQERNQQQDPLVCPAYQAYFRTIEELQQKILCAKSENARLVVQIDNAKLASDDFRTKYQTELSMRQLVEADINSLRRILDELTLCKSDLEAQVESLREELLCLKKNHEEEVNTLRCQLGDRLNVEVDAAPTVDLNRVLNETRCQYEALVETNRREVEEWFTTQSEELNKQVVSSSEQLQSCQAEIIELRRTVNALEIELQAQHCMRNSLENTLTESEARYSSQLSQVQCLITNVESQLGEIRADLERQNQEYQVLLDVRARLECEINTYRSLLESEDCNLPCNPCATTNASGSCCGPCGSSKRCC.

Positions 1–56 are head; sequence MSCESCLPALSCRTSCSSRPCVPPSCHGCTLPGACNIPANVGNCNWFCEGSFNGNE. Residues 56 to 367 enclose the IF rod domain; it reads EKETMQFLND…SLLESEDCNL (312 aa). Residues 57-91 form a coil 1A region; sequence KETMQFLNDRLASYMEKVRQLERENAELECRIQER. The tract at residues 92-102 is linker 1; sequence NQQQDPLVCPA. The segment at 103–203 is coil 1B; the sequence is YQAYFRTIEE…HEEEVNTLRC (101 aa). The segment at 204–219 is linker 12; sequence QLGDRLNVEVDAAPTV. Residues 220–363 are coil 2; it reads DLNRVLNETR…NTYRSLLESE (144 aa). Residues 364 to 392 form a tail region; that stretch reads DCNLPCNPCATTNASGSCCGPCGSSKRCC.

The protein belongs to the intermediate filament family. As to expression, expressed in the hair root in the hair shaft cuticle and cortex.

In Mus musculus (Mouse), this protein is Keratin, type I cuticular Ha4.